An 81-amino-acid chain; its full sequence is Three-finger toxin A1 (81 aa).

Positions 1 to 21 are cleaved as a signal peptide; sequence MKTLLLTLVVVTIVCLDFGHT. 4 cysteine pairs are disulfide-bonded: Cys24–Cys43, Cys38–Cys60, Cys62–Cys73, and Cys74–Cys79.

This sequence belongs to the three-finger toxin family. Short-chain subfamily. Type I alpha-neurotoxin sub-subfamily. Expressed by the venom gland.

Its subcellular location is the secreted. Its function is as follows. Binds and inhibits fetal (alpha-1-beta-1-gamma-delta/CHRNA1-CHRNB1-CHRNG-CHRND, IC(50)=1.4 nM), adult (alpha-1-beta-1-delta-epsilon/CHRNA1-CHRNB1-CHRND-CHRNE, IC(50)=12 nM) and neuronal alpha-7/CHRNA7 (IC(50)=400 nM) nicotinic acetylcholine receptors (nAChR) thereby impairing neuromuscular and neuronal transmissions. The chain is Three-finger toxin A1 from Micrurus laticollaris (Balsas coral snake).